We begin with the raw amino-acid sequence, 296 residues long: Putative thiosulfate sulfurtransferase SseA (296 aa).

Rhodanese domains lie at 31–138 (GKPG…DTSL) and 168–286 (ILGT…VPIT). C245 functions as the Cysteine persulfide intermediate in the catalytic mechanism. R250 serves as a coordination point for substrate.

The enzyme catalyses thiosulfate + hydrogen cyanide = thiocyanate + sulfite + 2 H(+). This is Putative thiosulfate sulfurtransferase SseA (sseA) from Mycobacterium leprae (strain TN).